The sequence spans 300 residues: Probable membrane transporter protein YtnM (300 aa).

Transmembrane regions (helical) follow at residues 4-24 (LIVFAFIGLLSQLIDGSLGMA), 33-53 (LLAFGITPAVASASVHLAEVV), 76-96 (LVIPGSIGAFLGAAFLSQLPG), 102-122 (YISLFLLLLGGYVLIRFLFQY), 139-159 (IPLGVIAGFADATGGGGWGPV), 206-226 (LWVFSLMAGGIIAAPIAAWLV), 231-251 (PQLMGVLVGGFIILVNARTLI), and 260-280 (VHPLIYTAIGAIWLSAVLFVL).

Belongs to the 4-toluene sulfonate uptake permease (TSUP) (TC 2.A.102) family.

It localises to the cell membrane. The polypeptide is Probable membrane transporter protein YtnM (ytnM) (Bacillus subtilis (strain 168)).